A 952-amino-acid chain; its full sequence is Protocadherin-20 (952 aa).

Residues 1–60 (MRGRGNARSLLVQAVSLRPATWHPCLDMGHLHRPSSRTSHRNLPHVFLLFLFVGPFNCLA) form the signal peptide. At 61-891 (SYSRATELLY…VESMSCMPTL (831 aa)) the chain is on the extracellular side. 6 Cadherin domains span residues 64 to 210 (RATE…APQF), 211 to 321 (PISE…CPLF), 322 to 536 (IDSQ…APVF), 537 to 640 (LQPL…SPRF), 641 to 743 (INKD…PPLV), and 747 to 864 (QSNM…EPEI). Asn135 is a glycosylation site (N-linked (GlcNAc...) asparagine). 2 N-linked (GlcNAc...) asparagine glycosylation sites follow: Asn327 and Asn333. Asn681, Asn749, Asn804, Asn845, and Asn850 each carry an N-linked (GlcNAc...) asparagine glycan. The helical transmembrane segment at 892–912 (VALSVISLGSITLVTGMGIYI) threads the bilayer. The Cytoplasmic portion of the chain corresponds to 913 to 952 (CLRKGKKHHREDDNLEVQIPLKGKIDLCMRERKPVDISNI).

It localises to the cell membrane. Functionally, potential calcium-dependent cell-adhesion protein. This Mus musculus (Mouse) protein is Protocadherin-20 (Pcdh20).